Reading from the N-terminus, the 196-residue chain is V-type proton ATPase subunit E (196 aa).

Belongs to the V-ATPase E subunit family.

Produces ATP from ADP in the presence of a proton gradient across the membrane. The protein is V-type proton ATPase subunit E of Clostridium botulinum (strain Alaska E43 / Type E3).